Consider the following 1176-residue polypeptide: 3-hydroxy-3-methylglutaryl-coenzyme A reductase (1176 aa).

Residues 1–34 are Cytoplasmic-facing; sequence MSLPNHSGSSAFKSFSYIVGTGIKRAAKLSTRNP. The chain crosses the membrane as a helical span at residues 35–55; it reads IEMIVVVLILSSFSYFYLFNL. Topologically, residues 56 to 299 are lumenal; it reads ARTSDIFSGT…VKELIDLADN (244 aa). N-linked (GlcNAc...) asparagine glycans are attached at residues Asn224 and Asn238. Residues 300 to 320 form a helical membrane-spanning segment; that stretch reads IDIIVILVGYIMMIATFISLY. The region spanning 301–465 is the SSD domain; the sequence is DIIVILVGYI…FTWYTAVLAL (165 aa). The Cytoplasmic segment spans residues 321–330; it reads VNMRAMGSRY. Residues 331-351 traverse the membrane as a helical segment; it reads TLATAVVFNGFFSFMLALLTV. The Lumenal segment spans residues 352–355; it reads RALG. A helical membrane pass occupies residues 356-376; the sequence is VDVYPVVLAEAIPFLAVTIGF. Topologically, residues 377-422 are cytoplasmic; it reads ERPFKLTKRVFQFSKETPLTKQEIRTTIMRAVDTVALPIARDCFME. The chain crosses the membrane as a helical span at residues 423–443; it reads IIVLVLGAKSGISGLEEFCLL. A topological domain (lumenal) is located at residue Ser444. A helical membrane pass occupies residues 445-465; that stretch reads AILLAYDFIIMFTWYTAVLAL. Residues 466–524 lie on the Cytoplasmic side of the membrane; sequence KLELLRIREINGISADDIKKGTKKSTGYIRRTVIKAFSDDHAAGANTANQKADGPIIGR. Residues 525-545 traverse the membrane as a helical segment; the sequence is VKLLMIVGFVVMHIFKFCSAF. Residues 546-622 lie on the Lumenal side of the membrane; the sequence is QSVGPQVNIT…DTYAVYIQHP (77 aa). N-linked (GlcNAc...) asparagine glycans are attached at residues Asn553 and Asn596. A helical membrane pass occupies residues 623–643; that stretch reads VISKWLTIALFVSLFLNTYLF. Over 644 to 1176 the chain is Cytoplasmic; sequence NVAKQPKQIV…GTEPGTCIKS (533 aa). Residues 699–724 are disordered; the sequence is PNHKRSHNHHHSHSHSHNHHSNHHQS. The segment covering 700–721 has biased composition (basic residues); that stretch reads NHKRSHNHHHSHSHSHNHHSNH. Catalysis depends on Glu841, which acts as the Charge relay system. 847 to 853 lines the CoA pocket; the sequence is STARGCK. NADP(+)-binding positions include 907–909 and 934–942; these read SRF and DAMGMNMIS. Residue Lys972 is the Charge relay system of the active site. Position 1001-1003 (1001-1003) interacts with CoA; the sequence is VLK. Asp1048 serves as the catalytic Charge relay system. A CoA-binding site is contributed by 1145-1146; that stretch reads AH. His1146 acts as the Proton donor in catalysis. 1150–1151 lines the NADP(+) pocket; that stretch reads NR. The disordered stretch occupies residues 1153 to 1176; it reads TQAPTITSGPAPSTGTEPGTCIKS.

This sequence belongs to the HMG-CoA reductase family.

Its subcellular location is the endoplasmic reticulum membrane. The catalysed reaction is (R)-mevalonate + 2 NADP(+) + CoA = (3S)-3-hydroxy-3-methylglutaryl-CoA + 2 NADPH + 2 H(+). It functions in the pathway metabolic intermediate biosynthesis; (R)-mevalonate biosynthesis; (R)-mevalonate from acetyl-CoA: step 3/3. Its function is as follows. HMG-CoA reductase; part of the first module of ergosterol biosynthesis pathway that includes the early steps of the pathway, conserved across all eukaryotes, and which results in the formation of mevalonate from acetyl-coenzyme A (acetyl-CoA). In this module, the cytosolic acetyl-CoA acetyltransferase catalyzes the formation of acetoacetyl-CoA. The hydroxymethylglutaryl-CoA synthase then condenses acetyl-CoA with acetoacetyl-CoA to form HMG-CoA. The rate-limiting step of the early module is the reduction to mevalonate by the 3-hydroxy-3-methylglutaryl-coenzyme A (HMG-CoA) reductase hmgA. The polypeptide is 3-hydroxy-3-methylglutaryl-coenzyme A reductase (Phycomyces blakesleeanus (strain ATCC 8743b / DSM 1359 / FGSC 10004 / NBRC 33097 / NRRL 1555)).